A 329-amino-acid polypeptide reads, in one-letter code: Protein SPATA31F3 (329 aa).

A helical membrane pass occupies residues 11-31 (VGYSVYTYGSIFIIALIIWQV). The stretch at 58 to 85 (SDRATRAKRTSKEEAEKLQKLLDTMKSQ) forms a coiled coil. 3 disordered regions span residues 149–184 (ADRS…RSAT), 201–250 (QQLD…AAPT), and 288–329 (KPMT…KRNI). Ser-152 and Ser-153 each carry phosphoserine. Polar residues-rich tracts occupy residues 154 to 184 (ELTY…RSAT) and 201 to 223 (QQLD…SSTD). Residues 232–242 (QKKRKKTKKLA) show a composition bias toward basic residues. Positions 293–320 (EPEKTHSPVRDQAEGAEKKKKPECDLKA) are enriched in basic and acidic residues.

This sequence belongs to the SPATA31 family.

The protein resides in the membrane. This is Protein SPATA31F3 from Rattus norvegicus (Rat).